A 728-amino-acid polypeptide reads, in one-letter code: Catalase B (728 aa).

Residues 1–15 (MRLTFIPSLIGVANA) form the signal peptide. Positions 16–27 (VCPYMTGELNRR) are excised as a propeptide. The active site involves His102. Asn120 is a glycosylation site (N-linked (GlcNAc...) asparagine). The active site involves Asn175. Tyr389 lines the heme pocket. Residues Asn448 and Asn551 are each glycosylated (N-linked (GlcNAc...) asparagine).

This sequence belongs to the catalase family. In terms of assembly, homotetramer. It depends on heme as a cofactor. N-glycosylated.

It is found in the secreted. It catalyses the reaction 2 H2O2 = O2 + 2 H2O. In terms of biological role, occurs in almost all aerobically respiring organisms and serves to protect cells from the toxic effects of hydrogen peroxide. The polypeptide is Catalase B (catB) (Aspergillus fumigatus (strain ATCC MYA-4609 / CBS 101355 / FGSC A1100 / Af293) (Neosartorya fumigata)).